A 72-amino-acid chain; its full sequence is DNA-directed RNA polymerase subunit omega (72 aa).

The protein belongs to the RNA polymerase subunit omega family. The RNAP catalytic core consists of 2 alpha, 1 beta, 1 beta' and 1 omega subunit. When a sigma factor is associated with the core the holoenzyme is formed, which can initiate transcription.

The catalysed reaction is RNA(n) + a ribonucleoside 5'-triphosphate = RNA(n+1) + diphosphate. Its function is as follows. Promotes RNA polymerase assembly. Latches the N- and C-terminal regions of the beta' subunit thereby facilitating its interaction with the beta and alpha subunits. The chain is DNA-directed RNA polymerase subunit omega from Francisella tularensis subsp. holarctica (strain LVS).